The chain runs to 72 residues: Prokaryotic ubiquitin-like protein Pup (72 aa).

Over residues 1–10 (MATKDTGGGQ) the composition is skewed to gly residues. A disordered region spans residues 1–45 (MATKDTGGGQQKATRSTEEVEEQAQDAQASEDLAERQEKLSDDVD). Positions 10–60 (QQKATRSTEEVEEQAQDAQASEDLAERQEKLSDDVDSVLDEIDDVLEENAE) form a coiled coil. Residues 28 to 66 (QASEDLAERQEKLSDDVDSVLDEIDDVLEENAEDFVRSF) are ARC ATPase binding. Basic and acidic residues predominate over residues 33-42 (LAERQEKLSD). At Gln-72 the chain carries Deamidated glutamine. An Isoglutamyl lysine isopeptide (Gln-Lys) (interchain with K-? in acceptor proteins) cross-link involves residue Gln-72.

It belongs to the prokaryotic ubiquitin-like protein family. As to quaternary structure, strongly interacts with the proteasome-associated ATPase ARC through a hydrophobic interface; the interacting region of Pup lies in its C-terminal half. There is one Pup binding site per ARC hexamer ring. Is modified by deamidation of its C-terminal glutamine to glutamate by the deamidase Dop, a prerequisite to the subsequent pupylation process.

It participates in protein degradation; proteasomal Pup-dependent pathway. Functionally, protein modifier that is covalently attached to lysine residues of substrate proteins, thereby targeting them for proteasomal degradation. The tagging system is termed pupylation. The protein is Prokaryotic ubiquitin-like protein Pup of Streptomyces griseus subsp. griseus (strain JCM 4626 / CBS 651.72 / NBRC 13350 / KCC S-0626 / ISP 5235).